A 190-amino-acid chain; its full sequence is Elongation factor P-like protein (190 aa).

Belongs to the elongation factor P family.

This Psychromonas ingrahamii (strain DSM 17664 / CCUG 51855 / 37) protein is Elongation factor P-like protein.